The chain runs to 990 residues: A-type ATP synthase subunit B (990 aa).

One can recognise a DOD-type homing endonuclease domain in the interval 491–614; it reads VAGLIASDGS…LQLLLKRLGV (124 aa).

The protein belongs to the ATPase alpha/beta chains family. Has multiple subunits with at least A(3), B(3), C, D, E, F, H, I and proteolipid K(x). This protein undergoes a protein self splicing that involves a post-translational excision of the VDE intervening region (intein) followed by peptide ligation.

Its subcellular location is the cell membrane. In terms of biological role, component of the A-type ATP synthase that produces ATP from ADP in the presence of a proton gradient across the membrane. The B chain is a regulatory subunit. This chain is A-type ATP synthase subunit B, found in Methanopyrus kandleri (strain AV19 / DSM 6324 / JCM 9639 / NBRC 100938).